Consider the following 591-residue polypeptide: Aspartate--tRNA ligase (591 aa).

An L-aspartate-binding site is contributed by E171. The tract at residues 195–198 (QLFK) is aspartate. R217 contacts L-aspartate. Residues 217-219 (RDE) and Q226 contribute to the ATP site. Position 448 (H448) interacts with L-aspartate. An ATP-binding site is contributed by E482. R489 lines the L-aspartate pocket. Position 534–537 (534–537 (GLDR)) interacts with ATP.

This sequence belongs to the class-II aminoacyl-tRNA synthetase family. Type 1 subfamily. In terms of assembly, homodimer.

It is found in the cytoplasm. It catalyses the reaction tRNA(Asp) + L-aspartate + ATP = L-aspartyl-tRNA(Asp) + AMP + diphosphate. Catalyzes the attachment of L-aspartate to tRNA(Asp) in a two-step reaction: L-aspartate is first activated by ATP to form Asp-AMP and then transferred to the acceptor end of tRNA(Asp). This is Aspartate--tRNA ligase from Aliivibrio salmonicida (strain LFI1238) (Vibrio salmonicida (strain LFI1238)).